The primary structure comprises 213 residues: StAR-related lipid transfer protein 5 (213 aa).

Residues M1 to E213 enclose the START domain.

May be involved in the intracellular transport of sterols or other lipids. May bind cholesterol or other sterols. This is StAR-related lipid transfer protein 5 (STARD5) from Homo sapiens (Human).